Reading from the N-terminus, the 1344-residue chain is Centrosomal P4.1-associated protein (1344 aa).

Disordered regions lie at residues S67 to L123 and P187 to V225. Polar residues predominate over residues S211 to V225. The residue at position 248 (S248) is a Phosphoserine. The disordered stretch occupies residues Q257–K300. Basic and acidic residues-rich tracts occupy residues A259–P271 and R282–N297. S304 carries the post-translational modification Phosphoserine. Positions V307–K382 are alpha/beta-tubulin binding. 2 disordered regions span residues Q347–H407 and T425–D470. Polar residues predominate over residues L388–Q398. The residue at position 528 (S528) is a Phosphoserine. 2 positions are modified to phosphoserine; by PLK2: S577 and S583. Disordered stretches follow at residues R600–S626 and T672–A735. The span at V709–S720 shows a compositional bias: basic and acidic residues. The residue at position 748 (S748) is a Phosphoserine. The tract at residues Q887–M1344 is interaction with STIL. The disordered stretch occupies residues Q1105–E1133.

It belongs to the TCP10 family. Forms homodimers. Associates with microtubules plus ends; binds to beta-tubulin subunits exposed on microtubule outer surface at its distal tip; also associates with microtubule lattice. Associated with the gamma-tubulin complex. Interacts with the head domain of EPB41. Interacts with LYST. Interacts with CEP152 (via C-terminus). Interacts with STIL. Forms a complex with STIL and SASS6. Phosphorylation at Ser-577 and Ser-583 by PLK2 is required for procentriole formation and centriole elongation. Phosphorylation by PLK2 oscillates during the cell cycle: it increases at G1/S transition and decreases during the exit from mitosis. Phosphorylation at Ser-583 is also mediated by PLK4 but is not a critical step in PLK4 function in procentriole assembly.

It is found in the cytoplasm. It localises to the cytoskeleton. The protein localises to the microtubule organizing center. The protein resides in the centrosome. Its subcellular location is the centriole. Plays an important role in cell division and centrosome function by participating in centriole duplication. Inhibits microtubule nucleation from the centrosome. Involved in the regulation of slow processive growth of centriolar microtubules. Acts as microtubule plus-end tracking protein that stabilizes centriolar microtubules and inhibits microtubule polymerization and extension from the distal ends of centrioles. Required for centriole elongation and for STIL-mediated centriole amplification. Required for the recruitment of CEP295 to the proximal end of new-born centrioles at the centriolar microtubule wall during early S phase in a PLK4-dependent manner. May be involved in the control of centriolar-microtubule growth by acting as a regulator of tubulin release. The polypeptide is Centrosomal P4.1-associated protein (Cpap) (Mus musculus (Mouse)).